The primary structure comprises 262 residues: Spindlin-1 (262 aa).

The interval 1 to 51 (MKTPFGKTPGQRSRADAGHAGVSANMMKKRTSHKKHRSSVGPSKPVSQPRR) is disordered. Glycyl lysine isopeptide (Lys-Gly) (interchain with G-Cter in SUMO2) cross-links involve residues K7 and K28. Residues 27–38 (MKKRTSHKKHRS) show a composition bias toward basic residues. K44 carries the post-translational modification N6-acetyllysine; alternate. A Glycyl lysine isopeptide (Lys-Gly) (interchain with G-Cter in SUMO2); alternate cross-link involves residue K44. The segment at 53–116 (IVGCRIQHGW…RVSALEVLPD (64 aa)) is tudor-like domain 1. The tract at residues 93–98 (GFDCVY) is histone H3K4me3 and H3R8me2a binding. A phosphoserine; by AURKA mark is found at S109 and S124. The segment at 132–193 (MIGKAVEHMF…DYKEGDLRIM (62 aa)) is tudor-like domain 2. Residue E142 is a region of interest, histone H3K4me3 and H3R8me2a binding. S199 is modified (phosphoserine). Positions 213-262 (LVGKQVEYAKEDGSKRTGMVIHQVEAKPSVYFIKFDDDFHIYVYDLVKTS) are tudor-like domain 3. Residues 250 to 252 (DFH) form a histone H3K4me3 and H3R8me2a binding region.

This sequence belongs to the SPIN/STSY family. As to quaternary structure, homodimer; may form higher-order oligomers. Interacts with TCF7L2/TCF4; the interaction is direct. Interacts with HABP4 and SERBP1. Interacts with SPINDOC; SPINDOC stabilizes SPIN1 and enhances its association with bivalent H3K4me3K9me3 mark. Interacts with SPOCD1; promoting recruitment of PIWIL4 and SPOCD1 to transposons. Post-translationally, phosphorylated during oocyte meiotic maturation. As to expression, highly expressed in ovarian cancer tissues.

It localises to the nucleus. The protein localises to the nucleolus. Functionally, chromatin reader that specifically recognizes and binds histone H3 both trimethylated at 'Lys-4' and 'Lys-9' (H3K4me3K9me3) and is involved in piRNA-mediated retrotransposon silencing during spermatogenesis. Plays a key role in the initiation of the PIWIL4-piRNA pathway, a pathway that directs transposon DNA methylation and silencing in the male embryonic germ cells, by promoting recruitment of DNA methylation machinery to transposons: binds young, but not old, LINE1 transposons, which are specifically marked with H3K4me3K9me3, and promotes the recruitment of PIWIL4 and SPOCD1 to transposons, leading to piRNA-directed DNA methylation. Also recognizes and binds histone H3 both trimethylated at 'Lys-4' and asymmetrically dimethylated at 'Arg-8' (H3K4me3 and H3R8me2a) and acts as an activator of Wnt signaling pathway downstream of PRMT2. In case of cancer, promotes cell cancer proliferation via activation of the Wnt signaling pathway. Overexpression induces metaphase arrest and chromosomal instability. Localizes to active rDNA loci and promotes the expression of rRNA genes. May play a role in cell-cycle regulation during the transition from gamete to embryo. Involved in oocyte meiotic resumption, a process that takes place before ovulation to resume meiosis of oocytes blocked in prophase I: may act by regulating maternal transcripts to control meiotic resumption. The protein is Spindlin-1 of Homo sapiens (Human).